Reading from the N-terminus, the 101-residue chain is Integration host factor subunit beta (101 aa).

A disordered region spans residues P57–D101. Over residues T82–D101 the composition is skewed to basic and acidic residues.

This sequence belongs to the bacterial histone-like protein family. Heterodimer of an alpha and a beta chain.

In terms of biological role, this protein is one of the two subunits of integration host factor, a specific DNA-binding protein that functions in genetic recombination as well as in transcriptional and translational control. This Bradyrhizobium diazoefficiens (strain JCM 10833 / BCRC 13528 / IAM 13628 / NBRC 14792 / USDA 110) protein is Integration host factor subunit beta.